Here is a 414-residue protein sequence, read N- to C-terminus: uncharacterized protein (414 aa).

The N-terminal stretch at 1 to 20 (MKKLLAIGILCIMVTAVMSG) is a signal peptide. A lipid anchor (S-archaeol cysteine) is attached at C21. The Fe/B12 periplasmic-binding domain occupies 119–389 (RVIVMSSTEI…DLATILHPEA (271 aa)).

It is found in the cell membrane. This is an uncharacterized protein from Methanocaldococcus jannaschii (strain ATCC 43067 / DSM 2661 / JAL-1 / JCM 10045 / NBRC 100440) (Methanococcus jannaschii).